Reading from the N-terminus, the 179-residue chain is Adenine phosphoribosyltransferase (179 aa).

It belongs to the purine/pyrimidine phosphoribosyltransferase family. As to quaternary structure, homodimer.

The protein resides in the cytoplasm. The catalysed reaction is AMP + diphosphate = 5-phospho-alpha-D-ribose 1-diphosphate + adenine. It participates in purine metabolism; AMP biosynthesis via salvage pathway; AMP from adenine: step 1/1. Catalyzes a salvage reaction resulting in the formation of AMP, that is energically less costly than de novo synthesis. The sequence is that of Adenine phosphoribosyltransferase from Methylacidiphilum infernorum (isolate V4) (Methylokorus infernorum (strain V4)).